Here is a 211-residue protein sequence, read N- to C-terminus: Guanylate kinase (211 aa).

A Guanylate kinase-like domain is found at 5-185; the sequence is GLLLILSSPS…AEEQLKMILS (181 aa). 12–19 is a binding site for ATP; sequence SPSGAGKS.

It belongs to the guanylate kinase family.

The protein resides in the cytoplasm. The catalysed reaction is GMP + ATP = GDP + ADP. Essential for recycling GMP and indirectly, cGMP. In Cereibacter sphaeroides (strain ATCC 17023 / DSM 158 / JCM 6121 / CCUG 31486 / LMG 2827 / NBRC 12203 / NCIMB 8253 / ATH 2.4.1.) (Rhodobacter sphaeroides), this protein is Guanylate kinase.